An 88-amino-acid chain; its full sequence is Small ribosomal subunit protein bS20 (88 aa).

The span at 1–10 (MANHKSSLKR) shows a compositional bias: basic residues. The disordered stretch occupies residues 1 to 24 (MANHKSSLKRAKQDIVRNTRNKSR).

This sequence belongs to the bacterial ribosomal protein bS20 family.

Binds directly to 16S ribosomal RNA. The polypeptide is Small ribosomal subunit protein bS20 (Desulfosudis oleivorans (strain DSM 6200 / JCM 39069 / Hxd3) (Desulfococcus oleovorans)).